The chain runs to 473 residues: Photosystem II CP43 reaction center protein (473 aa).

Positions 1–14 (MKTLYSLRRFYPVE) are excised as a propeptide. Threonine 15 is subject to N-acetylthreonine. At threonine 15 the chain carries Phosphothreonine. 5 consecutive transmembrane segments (helical) span residues 69 to 93 (LFEV…PHLA), 134 to 155 (LLGP…KDRN), 178 to 200 (KALY…RKIT), 255 to 275 (KPFA…LSYS), and 291 to 312 (WFNN…ASQA). Glutamate 367 contacts [CaMn4O5] cluster. The chain crosses the membrane as a helical span at residues 447-471 (RARAAAAGFEKGIDRDLEPVLSMTP).

It belongs to the PsbB/PsbC family. PsbC subfamily. In terms of assembly, PSII is composed of 1 copy each of membrane proteins PsbA, PsbB, PsbC, PsbD, PsbE, PsbF, PsbH, PsbI, PsbJ, PsbK, PsbL, PsbM, PsbT, PsbX, PsbY, PsbZ, Psb30/Ycf12, at least 3 peripheral proteins of the oxygen-evolving complex and a large number of cofactors. It forms dimeric complexes. It depends on Binds multiple chlorophylls and provides some of the ligands for the Ca-4Mn-5O cluster of the oxygen-evolving complex. It may also provide a ligand for a Cl- that is required for oxygen evolution. PSII binds additional chlorophylls, carotenoids and specific lipids. as a cofactor.

The protein localises to the plastid. Its subcellular location is the chloroplast thylakoid membrane. Its function is as follows. One of the components of the core complex of photosystem II (PSII). It binds chlorophyll and helps catalyze the primary light-induced photochemical processes of PSII. PSII is a light-driven water:plastoquinone oxidoreductase, using light energy to abstract electrons from H(2)O, generating O(2) and a proton gradient subsequently used for ATP formation. This chain is Photosystem II CP43 reaction center protein, found in Phalaenopsis aphrodite subsp. formosana (Moth orchid).